The following is an 87-amino-acid chain: Toxin Cll3 (87 aa).

Residues 1–19 (MNSLLMITACLAVIGTVWA) form the signal peptide. The LCN-type CS-alpha/beta domain maps to 20-85 (KEGYIVNYYD…VWPLPNKTCY (66 aa)). Cystine bridges form between cysteine 31–cysteine 84, cysteine 35–cysteine 60, cysteine 44–cysteine 65, and cysteine 48–cysteine 67. Tyrosine 85 is modified (tyrosine amide).

This sequence belongs to the long (4 C-C) scorpion toxin superfamily. Sodium channel inhibitor family. Beta subfamily. As to expression, expressed by the venom gland.

Its subcellular location is the secreted. Beta toxins bind voltage-independently at site-4 of sodium channels (Nav) and shift the voltage of activation toward more negative potentials thereby affecting sodium channel activation and promoting spontaneous and repetitive firing. This is Toxin Cll3 from Centruroides limpidus (Mexican scorpion).